The chain runs to 314 residues: Probable cell division protein WhiA (314 aa).

The segment at residues 274–308 (SLKELGEMVSTGPISKSGVNHRLRKLNDLADKIRN) is a DNA-binding region (H-T-H motif).

Belongs to the WhiA family.

In terms of biological role, involved in cell division and chromosome segregation. This is Probable cell division protein WhiA from Staphylococcus aureus (strain Mu3 / ATCC 700698).